We begin with the raw amino-acid sequence, 404 residues long: Advanced glycosylation end product-specific receptor (404 aa).

A signal peptide spans 1–22 (MAAGTAVGAWVLVLSLWGAVVG). Positions 23–116 (AQNITARIGE…KETKSNYRVR (94 aa)) constitute an Ig-like V-type domain. Residues 23–342 (AQNITARIGE…VGGSGLGTLA (320 aa)) lie on the Extracellular side of the membrane. Residues N25 and N81 are each glycosylated (N-linked (GlcNAc...) asparagine). Intrachain disulfides connect C38/C99 and C144/C208. Ig-like C2-type domains are found at residues 124–221 (PEIV…RALR) and 227–317 (PRVW…RAVS). A helical transmembrane segment spans residues 343 to 363 (LALGILGGLGTAALLIGVILW). Over 364–404 (QRRQRRGEERKAPENQEEEEERAELNQSEEPEAGESSTGGP) the chain is Cytoplasmic. Positions 367–404 (QRRGEERKAPENQEEEEERAELNQSEEPEAGESSTGGP) are disordered. Acidic residues predominate over residues 378-396 (NQEEEEERAELNQSEEPEA). Phosphoserine; by PKC/PRKCZ and ATM is present on S391.

As to quaternary structure, constitutive homodimer; disulfide-linked. Forms homooligomers. Interacts with S100A1 and APP. Interacts with S100B, S100A12 and S100A14. Interacts with TIRAP. Interacts with HMGB1. Interacts with LGP2; this interaction plays an important role in AGER-mediated pro-inflammatory responses and cytokine release. Interacts with double-strand break repair protein MRE11 which is a core component of the MRN complex. The interaction enhances MRE11 endonuclease activity and promotes DNA repair. Interacts with the MCM2-7 complex via interaction with complex member MCM2; the interaction is increased following DNA replication stress and stabilizes the MCM2-7 complex at replication forks. Interacts with longistatin, a protein from the saliva of the tick, Haemaphysalis longicornis; the interaction attenuates AGER-mediated production of reactive oxygen species (ROS), activation of NF-kappa-B and expression of adhesion molecules and cytokines in human endothelial cells. Phosphorylated on its cytoplasmic domain by PKCzeta/PRKCZ upon ligand binding. Phosphorylated by ATM following DNA damage. In terms of processing, targeted by the ubiquitin E3 ligase subunit FBXO10 to mediate its ubiquitination and degradation. As to expression, endothelial cells. Increased expression in pre-term labor and preeclampsia placentas compared to controls.

The protein resides in the cell membrane. The protein localises to the cell projection. It localises to the phagocytic cup. Its subcellular location is the early endosome. It is found in the nucleus. The protein resides in the secreted. Its function is as follows. Cell surface pattern recognition receptor that senses endogenous stress signals with a broad ligand repertoire including advanced glycation end products, S100 proteins, high-mobility group box 1 protein/HMGB1, amyloid beta/APP oligomers, nucleic acids, histones, phospholipids and glycosaminoglycans. Advanced glycosylation end products are nonenzymatically glycosylated proteins which accumulate in vascular tissue in aging and at an accelerated rate in diabetes. These ligands accumulate at inflammatory sites during the pathogenesis of various diseases including diabetes, vascular complications, neurodegenerative disorders and cancers, and RAGE transduces their binding into pro-inflammatory responses. Upon ligand binding, uses TIRAP and MYD88 as adapters to transduce the signal ultimately leading to the induction of inflammatory cytokines IL6, IL8 and TNFalpha through activation of NF-kappa-B. Interaction with S100A12 on endothelium, mononuclear phagocytes, and lymphocytes triggers cellular activation, with generation of key pro-inflammatory mediators. Interaction with S100B after myocardial infarction may play a role in myocyte apoptosis by activating ERK1/2 and p53/TP53 signaling. Contributes to the translocation of amyloid-beta peptide (ABPP) across the cell membrane from the extracellular to the intracellular space in cortical neurons. ABPP-initiated RAGE signaling, especially stimulation of p38 mitogen-activated protein kinase (MAPK), has the capacity to drive a transport system delivering ABPP as a complex with RAGE to the intraneuronal space. Participates in endothelial albumin transcytosis together with HMGB1 through the RAGE/SRC/Caveolin-1 pathway, leading to endothelial hyperpermeability. Mediates the loading of HMGB1 in extracellular vesicles (EVs) that shuttle HMGB1 to hepatocytes by transferrin-mediated endocytosis and subsequently promote hepatocyte pyroptosis by activating the NLRP3 inflammasome. Binds to DNA and promotes extracellular hypomethylated DNA (CpG DNA) uptake by cells via the endosomal route to activate inflammatory responses. Mediates phagocytosis by non-professional phagocytes (NPP) and this is enhanced by binding to ligands including RNA, DNA, HMGB1 and histones. Promotes NPP-mediated phagocytosis of Saccharomyces cerevisiae spores by binding to RNA attached to the spore wall. Also promotes NPP-mediated phagocytosis of apoptotic cells. Following DNA damage, recruited to DNA double-strand break sites where it colocalizes with the MRN repair complex via interaction with double-strand break repair protein MRE11. Enhances the endonuclease activity of MRE11, promoting the end resection of damaged DNA. Promotes DNA damage repair in trophoblasts which enhances trophoblast invasion and contributes to placental development and maintenance. Protects cells from DNA replication stress by localizing to damaged replication forks where it stabilizes the MCM2-7 complex and promotes faithful progression of the replication fork. Mediates the production of reactive oxygen species (ROS) in human endothelial cells. The sequence is that of Advanced glycosylation end product-specific receptor (AGER) from Homo sapiens (Human).